The chain runs to 333 residues: Ketol-acid reductoisomerase (NADP(+)) (333 aa).

Residues 1–179 (MFYDDDADLT…GGTRAGVIKT (179 aa)) form the KARI N-terminal Rossmann domain. Residues 22–25 (YGSQ), Lys45, Ser48, Ser50, and 80–83 (DTAQ) contribute to the NADP(+) site. His105 is a catalytic residue. Gly131 is an NADP(+) binding site. The KARI C-terminal knotted domain maps to 180-325 (TFKDETETDL…KRLRDLMSWV (146 aa)). Mg(2+) contacts are provided by Asp188, Glu192, Glu224, and Glu228. Ser249 serves as a coordination point for substrate.

The protein belongs to the ketol-acid reductoisomerase family. Requires Mg(2+) as cofactor.

It carries out the reaction (2R)-2,3-dihydroxy-3-methylbutanoate + NADP(+) = (2S)-2-acetolactate + NADPH + H(+). It catalyses the reaction (2R,3R)-2,3-dihydroxy-3-methylpentanoate + NADP(+) = (S)-2-ethyl-2-hydroxy-3-oxobutanoate + NADPH + H(+). It participates in amino-acid biosynthesis; L-isoleucine biosynthesis; L-isoleucine from 2-oxobutanoate: step 2/4. It functions in the pathway amino-acid biosynthesis; L-valine biosynthesis; L-valine from pyruvate: step 2/4. Its function is as follows. Involved in the biosynthesis of branched-chain amino acids (BCAA). Catalyzes an alkyl-migration followed by a ketol-acid reduction of (S)-2-acetolactate (S2AL) to yield (R)-2,3-dihydroxy-isovalerate. In the isomerase reaction, S2AL is rearranged via a Mg-dependent methyl migration to produce 3-hydroxy-3-methyl-2-ketobutyrate (HMKB). In the reductase reaction, this 2-ketoacid undergoes a metal-dependent reduction by NADPH to yield (R)-2,3-dihydroxy-isovalerate. The polypeptide is Ketol-acid reductoisomerase (NADP(+)) (Mycobacterium avium (strain 104)).